We begin with the raw amino-acid sequence, 837 residues long: DNA primase (837 aa).

The CHC2-type zinc-finger motif lies at Cys782–Cys821.

This sequence belongs to the herpesviridae DNA primase family. Associates with the helicase and the primase-associated factor to form the helicase-primase factor.

The protein localises to the host nucleus. Its function is as follows. Essential component of the helicase/primase complex. Unwinds the DNA at the replication forks and generates single-stranded DNA for both leading and lagging strand synthesis. The primase initiates primer synthesis and thereby produces large amount of short RNA primers on the lagging strand that the polymerase elongates using dNTPs. The chain is DNA primase (56) from Connochaetes taurinus (Blue wildebeest).